A 127-amino-acid chain; its full sequence is ATP synthase epsilon chain (127 aa).

This sequence belongs to the ATPase epsilon chain family. F-type ATPases have 2 components, CF(1) - the catalytic core - and CF(0) - the membrane proton channel. CF(1) has five subunits: alpha(3), beta(3), gamma(1), delta(1), epsilon(1). CF(0) has three main subunits: a, b and c.

It is found in the cell inner membrane. Its function is as follows. Produces ATP from ADP in the presence of a proton gradient across the membrane. This is ATP synthase epsilon chain from Leptospira borgpetersenii serovar Hardjo-bovis (strain JB197).